Reading from the N-terminus, the 211-residue chain is Interleukin-6 (211 aa).

The first 25 residues, 1 to 25 (MNSLSTSTFSPVAFSLGLLLVMATA), serve as a signal peptide directing secretion. Residues cysteine 71 and cysteine 77 are joined by a disulfide bond. Phosphoserine is present on serine 80. Cysteine 100 and cysteine 110 are joined by a disulfide.

Belongs to the IL-6 superfamily. In terms of assembly, component of a hexamer of two molecules each of IL6, IL6R and IL6ST; first binds to IL6R to associate with the signaling subunit IL6ST. Interacts with IL6R (via the N-terminal ectodomain); this interaction may be affected by IL6R-binding with SORL1, hence decreasing IL6 cis signaling. Interacts with SORL1 (via the N-terminal ectodomain); this interaction leads to IL6 internalization and lysosomal degradation. May form a trimeric complex with the soluble SORL1 ectodomain and soluble IL6R receptor; this interaction might stabilize circulating IL6, hence promoting IL6 trans signaling.

Its subcellular location is the secreted. In terms of biological role, cytokine with a wide variety of biological functions in immunity, tissue regeneration, and metabolism. Binds to IL6R, then the complex associates to the signaling subunit IL6ST/gp130 to trigger the intracellular IL6-signaling pathway. The interaction with the membrane-bound IL6R and IL6ST stimulates 'classic signaling', whereas the binding of IL6 and soluble IL6R to IL6ST stimulates 'trans-signaling'. Alternatively, 'cluster signaling' occurs when membrane-bound IL6:IL6R complexes on transmitter cells activate IL6ST receptors on neighboring receiver cells. Its function is as follows. IL6 is a potent inducer of the acute phase response. Rapid production of IL6 contributes to host defense during infection and tissue injury, but excessive IL6 synthesis is involved in disease pathology. In the innate immune response, is synthesized by myeloid cells, such as macrophages and dendritic cells, upon recognition of pathogens through toll-like receptors (TLRs) at the site of infection or tissue injury. In the adaptive immune response, is required for the differentiation of B cells into immunoglobulin-secreting cells. Plays a major role in the differentiation of CD4(+) T cell subsets. Essential factor for the development of T follicular helper (Tfh) cells that are required for the induction of germinal-center formation. Required to drive naive CD4(+) T cells to the Th17 lineage. Also required for proliferation of myeloma cells and the survival of plasmablast cells. Acts as an essential factor in bone homeostasis and on vessels directly or indirectly by induction of VEGF, resulting in increased angiogenesis activity and vascular permeability. Induces, through 'trans-signaling' and synergistically with IL1B and TNF, the production of VEGF. Involved in metabolic controls, is discharged into the bloodstream after muscle contraction increasing lipolysis and improving insulin resistance. 'Trans-signaling' in central nervous system also regulates energy and glucose homeostasis. Mediates, through GLP-1, crosstalk between insulin-sensitive tissues, intestinal L cells and pancreatic islets to adapt to changes in insulin demand. Also acts as a myokine. Plays a protective role during liver injury, being required for maintenance of tissue regeneration. Also has a pivotal role in iron metabolism by regulating HAMP/hepcidin expression upon inflammation or bacterial infection. Through activation of IL6ST-YAP-NOTCH pathway, induces inflammation-induced epithelial regeneration. The sequence is that of Interleukin-6 (IL6) from Lama glama (Llama).